A 393-amino-acid polypeptide reads, in one-letter code: 2-nitroimidazole transporter (393 aa).

Residues 1–12 are Cytoplasmic-facing; sequence MTCSTSLSGKNR. A helical transmembrane segment spans residues 13–33; the sequence is IVLIAGILMIATTLRVTFTGA. Residues 34 to 52 lie on the Periplasmic side of the membrane; it reads APLLDTIRSAYSLTTAQTG. The chain crosses the membrane as a helical span at residues 53-73; it reads LLTTLPLLAFALISPLAAPVA. Residues 74-80 lie on the Cytoplasmic side of the membrane; sequence RRFGMER. 2 helical membrane-spanning segments follow: residues 81-101 and 102-122; these read SLFAALLLICAGIAIRSLPSP and YLLFGGTAVIGGGIALGNVLL. Over 123–140 the chain is Cytoplasmic; the sequence is PGLIKRDFPHSVARLTGA. A helical transmembrane segment spans residues 141 to 161; sequence YSLTMGAAAALGSAMVVPLAL. At 162 to 163 the chain is on the periplasmic side; that stretch reads NG. A helical membrane pass occupies residues 164–184; that stretch reads FGWQGALLMLMCFPLLALFLW. Residues 185 to 218 are Cytoplasmic-facing; the sequence is LPQWRSQQHANLSTSRALHTRGIWRSPLAWQVTL. The helical transmembrane segment at 219–239 threads the bilayer; it reads FLGINSLVYYVIIGWLPAILI. At 240–249 the chain is on the periplasmic side; sequence SHGYSEAQAG. The helical transmembrane segment at 250-270 threads the bilayer; the sequence is SLHGLLQLATAAPGLLIPLFL. Topologically, residues 271 to 278 are cytoplasmic; it reads HHVKDQRG. A helical transmembrane segment spans residues 279–299; it reads IAAFVALMCAVGAVGLCFMPA. At 300–304 the chain is on the periplasmic side; it reads HAITW. The chain crosses the membrane as a helical span at residues 305 to 325; it reads TLLFGFGSGATMILGLTFIGL. Topologically, residues 326 to 334 are cytoplasmic; that stretch reads RASSAHQAA. A helical transmembrane segment spans residues 335–355; that stretch reads ALSGMAQSVGYLLAACGPPLM. Topologically, residues 356–366 are periplasmic; the sequence is GKIHDANGNWS. Residues 367–387 traverse the membrane as a helical segment; sequence VPLMGVAILSLLMAIFGLCAG. The Cytoplasmic portion of the chain corresponds to 388–393; it reads RDKEIR.

It belongs to the major facilitator superfamily. Cyanate porter (TC 2.A.1.17) family.

It localises to the cell inner membrane. In terms of biological role, involved in efflux of 2-nitroimidazole. The chain is 2-nitroimidazole transporter from Escherichia coli (strain K12).